Reading from the N-terminus, the 164-residue chain is Osteocalcin 2b (164 aa).

The first 18 residues, 1 to 18 (MKSLTLLTICAVLSVSLS), serve as a signal peptide directing secretion. A propeptide spanning residues 19 to 115 (MNDLALDVVL…LASVLLRRKR (97 aa)) is cleaved from the precursor. Low complexity predominate over residues 30-95 (PDPAAEPAPA…EAMAEDPAAA (66 aa)). Residues 30-99 (PDPAAEPAPA…EDPAAATEPE (70 aa)) are disordered. Positions 128-160 (QVESLSEVCELNLACEHMAETAGIVAAYTAYYG) constitute a Gla domain. Positions 130, 134, and 137 each coordinate Ca(2+). 3 positions are modified to 4-carboxyglutamate: E130, E134, and E137. Residues C136 and C142 are joined by a disulfide bond.

This sequence belongs to the osteocalcin/matrix Gla protein family. Gamma-carboxyglutamate residues are formed by vitamin K dependent carboxylation. These residues are essential for the binding of calcium.

The protein resides in the secreted. Functionally, binds strongly to apatite and calcium. This is Osteocalcin 2b from Oncorhynchus mykiss (Rainbow trout).